The chain runs to 156 residues: MAKEEIKIIAQNKKAYHDYFIEETYEAGIVLSGTEVKSIRMGKVNLKDSFARVENNEVYLYNMHISPYEKGNIFNKDPLRTRKLLLNRHEINKLIGYVTRKGYTLIPTKLYLKRGLVKVELAVARGKKLYDKREDIARRDAKSELEKHFKEKQLGI.

This sequence belongs to the SmpB family.

It is found in the cytoplasm. Required for rescue of stalled ribosomes mediated by trans-translation. Binds to transfer-messenger RNA (tmRNA), required for stable association of tmRNA with ribosomes. tmRNA and SmpB together mimic tRNA shape, replacing the anticodon stem-loop with SmpB. tmRNA is encoded by the ssrA gene; the 2 termini fold to resemble tRNA(Ala) and it encodes a 'tag peptide', a short internal open reading frame. During trans-translation Ala-aminoacylated tmRNA acts like a tRNA, entering the A-site of stalled ribosomes, displacing the stalled mRNA. The ribosome then switches to translate the ORF on the tmRNA; the nascent peptide is terminated with the 'tag peptide' encoded by the tmRNA and targeted for degradation. The ribosome is freed to recommence translation, which seems to be the essential function of trans-translation. This Thermoanaerobacter pseudethanolicus (strain ATCC 33223 / 39E) (Clostridium thermohydrosulfuricum) protein is SsrA-binding protein.